Here is a 74-residue protein sequence, read N- to C-terminus: Delta-actitoxin-Amc3a (74 aa).

The N-terminal stretch at 1–19 (MNRLIILVVAAVFLGMASA) is a signal peptide. The propeptide occupies 20–24 (EEDVL). At Pro-29 the chain carries Hydroxyproline. 3 cysteine pairs are disulfide-bonded: Cys-30–Cys-70, Cys-32–Cys-60, and Cys-53–Cys-71. Gln-73 is subject to Glutamine amide.

This sequence belongs to the sea anemone sodium channel inhibitory toxin family. Type I subfamily.

It localises to the secreted. It is found in the nematocyst. Functionally, inhibits voltage-gated sodium channels (Nav). The protein is Delta-actitoxin-Amc3a of Antheopsis maculata (Sea anemone).